A 117-amino-acid chain; its full sequence is Large ribosomal subunit protein bL19 (117 aa).

This sequence belongs to the bacterial ribosomal protein bL19 family.

Its function is as follows. This protein is located at the 30S-50S ribosomal subunit interface and may play a role in the structure and function of the aminoacyl-tRNA binding site. The polypeptide is Large ribosomal subunit protein bL19 (Shewanella woodyi (strain ATCC 51908 / MS32)).